Consider the following 124-residue polypeptide: Small ribosomal subunit protein uS12 (124 aa).

Residue D90 is modified to 3-methylthioaspartic acid.

It belongs to the universal ribosomal protein uS12 family. As to quaternary structure, part of the 30S ribosomal subunit. Contacts proteins S8 and S17. May interact with IF1 in the 30S initiation complex.

Functionally, with S4 and S5 plays an important role in translational accuracy. Interacts with and stabilizes bases of the 16S rRNA that are involved in tRNA selection in the A site and with the mRNA backbone. Located at the interface of the 30S and 50S subunits, it traverses the body of the 30S subunit contacting proteins on the other side and probably holding the rRNA structure together. The combined cluster of proteins S8, S12 and S17 appears to hold together the shoulder and platform of the 30S subunit. This is Small ribosomal subunit protein uS12 from Wolbachia pipientis wMel.